The primary structure comprises 458 residues: Glutamyl-tRNA reductase (458 aa).

Residues 49-52 (TCNR), Ser-109, 114-116 (EQQ), and Gln-120 each bind substrate. Cys-50 functions as the Nucleophile in the catalytic mechanism. 191 to 196 (GAGAMA) serves as a coordination point for NADP(+).

The protein belongs to the glutamyl-tRNA reductase family. In terms of assembly, homodimer.

It carries out the reaction (S)-4-amino-5-oxopentanoate + tRNA(Glu) + NADP(+) = L-glutamyl-tRNA(Glu) + NADPH + H(+). Its pathway is porphyrin-containing compound metabolism; protoporphyrin-IX biosynthesis; 5-aminolevulinate from L-glutamyl-tRNA(Glu): step 1/2. In terms of biological role, catalyzes the NADPH-dependent reduction of glutamyl-tRNA(Glu) to glutamate 1-semialdehyde (GSA). The protein is Glutamyl-tRNA reductase of Corynebacterium aurimucosum (strain ATCC 700975 / DSM 44827 / CIP 107346 / CN-1) (Corynebacterium nigricans).